Consider the following 744-residue polypeptide: Protein zyg-11 homolog B (744 aa).

3 LRR repeats span residues 185–208 (LPRL…LACK), 216–236 (MHHL…VREL), and 237–261 (KHLN…LLEQ).

It belongs to the zyg-11 family. Interacts with ELOC/Elongin C. Part of an E3 ubiquitin ligase complex including ZYG11B, CUL2 and Elongin BC.

Serves as substrate adapter subunit in the E3 ubiquitin ligase complex ZYG11B-CUL2-Elongin BC. Acts redudantly with ZER1 to target substrates bearing N-terminal glycine degrons for proteasomal degradation. Involved in the clearance of proteolytic fragments generated by caspase cleavage during apoptosis since N-terminal glycine degrons are strongly enriched at caspase cleavage sites. Also important in the quality control of protein N-myristoylation in which N-terminal glycine degrons are conditionally exposed after a failure of N-myristoylation. The sequence is that of Protein zyg-11 homolog B from Mus musculus (Mouse).